Here is a 376-residue protein sequence, read N- to C-terminus: Succinyl-diaminopimelate desuccinylase (376 aa).

His67 provides a ligand contact to Zn(2+). The active site involves Asp69. Asp100 contributes to the Zn(2+) binding site. The Proton acceptor role is filled by Glu134. Residues Glu135, Glu163, and His349 each contribute to the Zn(2+) site.

The protein belongs to the peptidase M20A family. DapE subfamily. Homodimer. The cofactor is Zn(2+). Co(2+) is required as a cofactor.

The enzyme catalyses N-succinyl-(2S,6S)-2,6-diaminopimelate + H2O = (2S,6S)-2,6-diaminopimelate + succinate. It functions in the pathway amino-acid biosynthesis; L-lysine biosynthesis via DAP pathway; LL-2,6-diaminopimelate from (S)-tetrahydrodipicolinate (succinylase route): step 3/3. Functionally, catalyzes the hydrolysis of N-succinyl-L,L-diaminopimelic acid (SDAP), forming succinate and LL-2,6-diaminopimelate (DAP), an intermediate involved in the bacterial biosynthesis of lysine and meso-diaminopimelic acid, an essential component of bacterial cell walls. The polypeptide is Succinyl-diaminopimelate desuccinylase (Shewanella woodyi (strain ATCC 51908 / MS32)).